A 961-amino-acid chain; its full sequence is Phosphofurin acidic cluster sorting protein 1 (961 aa).

Residues 1-19 (MAERGGAGGGPGGSGGGSS) are compositionally biased toward gly residues. 2 disordered regions span residues 1-70 (MAER…SSST) and 76-95 (VAVA…RTPA). An N-acetylalanine modification is found at alanine 2. Over residues 20–34 (QRGSGVAQSPQQQPQ) the composition is skewed to low complexity. Serine 28 is modified (phosphoserine). Residues 35–46 (QQPPQPQQPTPP) are compositionally biased toward pro residues. At threonine 44 the chain carries Phosphothreonine. Low complexity predominate over residues 51 to 70 (ATSSSSSTSAAAASSSSSST). At tyrosine 249 the chain carries Phosphotyrosine. Positions 260–271 (GIKSKLSDRSPD) are enriched in basic and acidic residues. Disordered regions lie at residues 260–297 (GIKS…LHGQ) and 375–426 (NPSD…GKDT). Over residues 274–291 (NYSEEEEESFSSEQEGSD) the composition is skewed to acidic residues. A coiled-coil region spans residues 351–375 (HVSREQIREVEEDLDELYDSLEMYN). Phosphoserine is present on residues serine 377 and serine 379. A compositionally biased stretch (polar residues) spans 404–426 (MSQSSSQTEIGSLNSKGSLGKDT). 2 positions are modified to phosphoserine: serine 428 and serine 493. Disordered regions lie at residues 475-540 (EKVK…HSTQ) and 758-802 (SPST…SMSS). At threonine 502 the chain carries Phosphothreonine. Phosphoserine is present on residues serine 517, serine 526, serine 527, serine 529, and serine 532. Residues 768 to 802 (SPVVSLTVPSTSPPSSSGLSRDATATPPSSPSMSS) are compositionally biased toward low complexity.

This sequence belongs to the PACS family. Associates with AP-1 and AP-3 but not with AP-2 complexes. Interacts with FURIN. Forms a ternary complex with FURIN and AP-1. Interacts with PKD2 (via acidic region). Interacts with SORL1. Interacts with WDR37.

It is found in the golgi apparatus. The protein resides in the trans-Golgi network. Its function is as follows. Coat protein that is involved in the localization of trans-Golgi network (TGN) membrane proteins that contain acidic cluster sorting motifs. Controls the endosome-to-Golgi trafficking of furin and mannose-6-phosphate receptor by connecting the acidic-cluster-containing cytoplasmic domain of these molecules with the adapter-protein complex-1 (AP-1) of endosomal clathrin-coated membrane pits. Required for normal ER Ca2+ handling in lymphocytes. Together with WDR37, it plays an essential role in lymphocyte development, quiescence and survival. Required for stabilizing peripheral lymphocyte populations. This Mus musculus (Mouse) protein is Phosphofurin acidic cluster sorting protein 1 (Pacs1).